A 49-amino-acid chain; its full sequence is Large ribosomal subunit protein bL33 (49 aa).

The protein belongs to the bacterial ribosomal protein bL33 family.

This chain is Large ribosomal subunit protein bL33, found in Clostridium perfringens (strain ATCC 13124 / DSM 756 / JCM 1290 / NCIMB 6125 / NCTC 8237 / Type A).